The chain runs to 425 residues: Serine--tRNA ligase (425 aa).

Residue 231–233 participates in L-serine binding; the sequence is TAE. 262–264 serves as a coordination point for ATP; sequence RSE. E285 contacts L-serine. ATP is bound at residue 349-352; sequence EISS. S385 is a binding site for L-serine.

The protein belongs to the class-II aminoacyl-tRNA synthetase family. Type-1 seryl-tRNA synthetase subfamily. As to quaternary structure, homodimer. The tRNA molecule binds across the dimer.

It is found in the cytoplasm. It catalyses the reaction tRNA(Ser) + L-serine + ATP = L-seryl-tRNA(Ser) + AMP + diphosphate + H(+). The enzyme catalyses tRNA(Sec) + L-serine + ATP = L-seryl-tRNA(Sec) + AMP + diphosphate + H(+). It participates in aminoacyl-tRNA biosynthesis; selenocysteinyl-tRNA(Sec) biosynthesis; L-seryl-tRNA(Sec) from L-serine and tRNA(Sec): step 1/1. Functionally, catalyzes the attachment of serine to tRNA(Ser). Is also able to aminoacylate tRNA(Sec) with serine, to form the misacylated tRNA L-seryl-tRNA(Sec), which will be further converted into selenocysteinyl-tRNA(Sec). This Bacillus licheniformis (strain ATCC 14580 / DSM 13 / JCM 2505 / CCUG 7422 / NBRC 12200 / NCIMB 9375 / NCTC 10341 / NRRL NRS-1264 / Gibson 46) protein is Serine--tRNA ligase.